A 249-amino-acid polypeptide reads, in one-letter code: Glucosamine-6-phosphate deaminase 2 (249 aa).

Asp67 (proton acceptor; for enolization step) is an active-site residue. Residue Asn136 is the For ring-opening step of the active site. Catalysis depends on His138, which acts as the Proton acceptor; for ring-opening step. The For ring-opening step role is filled by Glu143.

This sequence belongs to the glucosamine/galactosamine-6-phosphate isomerase family. NagB subfamily.

The catalysed reaction is alpha-D-glucosamine 6-phosphate + H2O = beta-D-fructose 6-phosphate + NH4(+). It participates in amino-sugar metabolism; N-acetylneuraminate degradation; D-fructose 6-phosphate from N-acetylneuraminate: step 5/5. Catalyzes the reversible isomerization-deamination of glucosamine 6-phosphate (GlcN6P) to form fructose 6-phosphate (Fru6P) and ammonium ion. Required for growth on glucosamine and also provides the majority of GlcN6P deaminase activity during growth on N-acetylglucosamine (GlcNAc). The polypeptide is Glucosamine-6-phosphate deaminase 2 (Bacillus subtilis (strain 168)).